The following is a 283-amino-acid chain: Probable endonuclease 4 (283 aa).

Residues histidine 67, histidine 107, glutamate 144, aspartate 178, histidine 181, histidine 215, aspartate 228, histidine 230, and glutamate 260 each contribute to the Zn(2+) site.

Belongs to the AP endonuclease 2 family. Requires Zn(2+) as cofactor.

It carries out the reaction Endonucleolytic cleavage to 5'-phosphooligonucleotide end-products.. In terms of biological role, endonuclease IV plays a role in DNA repair. It cleaves phosphodiester bonds at apurinic or apyrimidinic (AP) sites, generating a 3'-hydroxyl group and a 5'-terminal sugar phosphate. This chain is Probable endonuclease 4, found in Citrifermentans bemidjiense (strain ATCC BAA-1014 / DSM 16622 / JCM 12645 / Bem) (Geobacter bemidjiensis).